Consider the following 393-residue polypeptide: uncharacterized protein (393 aa).

The Cytoplasmic segment spans residues 1–17 (MVSKDQTSFNKRWTLGL). The helical transmembrane segment at 18 to 38 (LMLGLVIILWVLSSFLINLIF) threads the bilayer. Over 39 to 46 (EDDSYRKP) the chain is Vacuolar. Residues 47 to 67 (FFITYTNTAAFIFYLFPTAKA) traverse the membrane as a helical segment. Over 68–132 (VVVNYKDTGR…LYETIKLSAE (65 aa)) the chain is Cytoplasmic. Residue Ser93 is modified to Phosphoserine. A helical transmembrane segment spans residues 133–153 (FCILWFTANLVTNASLAFTSV). At 154 to 156 (ASQ) the chain is on the vacuolar side. The chain crosses the membrane as a helical span at residues 157–176 (TILSTTSSFFTLFIGAICHV). At 177–182 (ESLSKS) the chain is on the cytoplasmic side. Residues 183–200 (KVLGSFISFVGIIMVTKS) traverse the membrane as a helical segment. Topologically, residues 201–219 (DSHQRYQRHIADVSGDDND) are vacuolar. Residues 220 to 240 (AVQVLIGNLLALAGAVLYGVY) form a helical membrane-spanning segment. Residues 241–257 (STLLKREVGDETRVNMK) are Cytoplasmic-facing. Residues 258–278 (IFFGFVGLFNLLFLWPSLIVL) form a helical membrane-spanning segment. Topologically, residues 279-292 (DFFGWEPFSLPKDP) are vacuolar. A helical membrane pass occupies residues 293–313 (KVVVIIFVNCLITFVSDFCWA). At 314–321 (KAMLLTSP) the chain is on the cytoplasmic side. The chain crosses the membrane as a helical span at residues 322 to 342 (LTVTVGLSITIPLAMFGDVIF). Topologically, residues 343–345 (KHK) are vacuolar. A helical membrane pass occupies residues 346–366 (TMSALYLFGATLILGSFFIIN). At 367–393 (KSSEEEHFENSITASNYESVEVPAANN) the chain is on the cytoplasmic side.

It belongs to the TPT transporter family.

Its subcellular location is the vacuole membrane. This is an uncharacterized protein from Saccharomyces cerevisiae (strain ATCC 204508 / S288c) (Baker's yeast).